A 908-amino-acid chain; its full sequence is Structural core protein VP2 (908 aa).

The segment covering 1–19 (MANPQNRVQTERQQNNSSP) has biased composition (polar residues). The tract at residues 1–25 (MANPQNRVQTERQQNNSSPYLRGDE) is disordered.

This sequence belongs to the orbivirus VP3 family.

The protein localises to the virion. This is Structural core protein VP2 (Segment-2) from Ixodes (gulls).